We begin with the raw amino-acid sequence, 108 residues long: UPF0060 membrane protein BLi00854/BL03049 (108 aa).

Transmembrane regions (helical) follow at residues 3-23 (IAIG…YLVW), 31-51 (PLWY…IPAF), 60-80 (VYAA…WLVD), and 86-106 (LYDW…LWAP).

It belongs to the UPF0060 family.

Its subcellular location is the cell membrane. This chain is UPF0060 membrane protein BLi00854/BL03049, found in Bacillus licheniformis (strain ATCC 14580 / DSM 13 / JCM 2505 / CCUG 7422 / NBRC 12200 / NCIMB 9375 / NCTC 10341 / NRRL NRS-1264 / Gibson 46).